A 245-amino-acid polypeptide reads, in one-letter code: Carbohydrate deacetylase (245 aa).

Residues His59 and His125 each contribute to the Mg(2+) site.

The protein belongs to the YdjC deacetylase family. In terms of assembly, homodimer. Requires Mg(2+) as cofactor.

Functionally, probably catalyzes the deacetylation of acetylated carbohydrates an important step in the degradation of oligosaccharides. The polypeptide is Carbohydrate deacetylase (Listeria monocytogenes serotype 4b (strain CLIP80459)).